A 315-amino-acid polypeptide reads, in one-letter code: Biotin synthase (315 aa).

Residues 39–266 enclose the Radical SAM core domain; that stretch reads NSLQFATLLS…KSAIRLTAGR (228 aa). [4Fe-4S] cluster-binding residues include C54, C58, and C61. [2Fe-2S] cluster contacts are provided by C98, C129, C189, and R261.

The protein belongs to the radical SAM superfamily. Biotin synthase family. As to quaternary structure, homodimer. [4Fe-4S] cluster is required as a cofactor. [2Fe-2S] cluster serves as cofactor.

The catalysed reaction is (4R,5S)-dethiobiotin + (sulfur carrier)-SH + 2 reduced [2Fe-2S]-[ferredoxin] + 2 S-adenosyl-L-methionine = (sulfur carrier)-H + biotin + 2 5'-deoxyadenosine + 2 L-methionine + 2 oxidized [2Fe-2S]-[ferredoxin]. It functions in the pathway cofactor biosynthesis; biotin biosynthesis; biotin from 7,8-diaminononanoate: step 2/2. Catalyzes the conversion of dethiobiotin (DTB) to biotin by the insertion of a sulfur atom into dethiobiotin via a radical-based mechanism. The sequence is that of Biotin synthase from Legionella pneumophila (strain Lens).